Reading from the N-terminus, the 98-residue chain is ATP synthase subunit c (98 aa).

The next 2 helical transmembrane spans lie at 27–47 and 73–93; these read ALAL…GLGL and IIGA…FFVV.

This sequence belongs to the ATPase C chain family. As to quaternary structure, F-type ATPases have 2 components, F(1) - the catalytic core - and F(0) - the membrane proton channel. F(1) has five subunits: alpha(3), beta(3), gamma(1), delta(1), epsilon(1). F(0) has three main subunits: a(1), b(2) and c(10-14). The alpha and beta chains form an alternating ring which encloses part of the gamma chain. F(1) is attached to F(0) by a central stalk formed by the gamma and epsilon chains, while a peripheral stalk is formed by the delta and b chains.

The protein localises to the cell inner membrane. In terms of biological role, f(1)F(0) ATP synthase produces ATP from ADP in the presence of a proton or sodium gradient. F-type ATPases consist of two structural domains, F(1) containing the extramembraneous catalytic core and F(0) containing the membrane proton channel, linked together by a central stalk and a peripheral stalk. During catalysis, ATP synthesis in the catalytic domain of F(1) is coupled via a rotary mechanism of the central stalk subunits to proton translocation. Its function is as follows. Key component of the F(0) channel; it plays a direct role in translocation across the membrane. A homomeric c-ring of between 10-14 subunits forms the central stalk rotor element with the F(1) delta and epsilon subunits. The protein is ATP synthase subunit c of Protochlamydia amoebophila (strain UWE25).